Reading from the N-terminus, the 503-residue chain is Beta-mannosyltransferase 4 (503 aa).

Residues 1–24 lie on the Cytoplasmic side of the membrane; that stretch reads MKLDTQQISHLLSRQMYHLAPRKK. The chain crosses the membrane as a helical span at residues 25–45; sequence LLIWGGSLGFVLLLLIVASSH. The Extracellular portion of the chain corresponds to 46-503; sequence QRIRSTILHR…QYCQRYGELH (458 aa). The N-linked (GlcNAc...) asparagine glycan is linked to asparagine 468.

The protein belongs to the BMT family.

Its subcellular location is the membrane. Its function is as follows. Beta-mannosyltransferase involved in cell wall biosynthesis. Responsible for addition of a hexose to the beta-mannose chain. This Komagataella phaffii (strain ATCC 76273 / CBS 7435 / CECT 11047 / NRRL Y-11430 / Wegner 21-1) (Yeast) protein is Beta-mannosyltransferase 4 (BMT4).